The following is a 766-amino-acid chain: Lanosterol synthase ERG7 (766 aa).

The segment at 1-47 is disordered; it reads MVANSTGRDASALKSRKRAADSESEPLLKQGQPFPKQPRIGSELDKT. One copy of the PFTB 1 repeat lies at 148–190; sequence ATAIYNYISARAHPEDGGWGLHIEGESSVFGTLMNYVALRLVG. Catalysis depends on aspartate 482, which acts as the Proton donor. PFTB repeat units follow at residues 586–626 and 635–676; these read IRTA…KHIG and SRRG…VVQT.

It belongs to the terpene cyclase/mutase family.

It localises to the lipid droplet. Its subcellular location is the endoplasmic reticulum membrane. The enzyme catalyses (S)-2,3-epoxysqualene = lanosterol. It participates in terpene metabolism; lanosterol biosynthesis; lanosterol from farnesyl diphosphate: step 3/3. The protein operates within steroid metabolism; ergosterol biosynthesis. Functionally, lanosterol synthase; part of the third module of ergosterol biosynthesis pathway that includes the late steps of the pathway. ERG7 catalyzes the cyclization of (S)-2,3 oxidosqualene to lanosterol, a reaction that forms the sterol core. The third module or late pathway involves the ergosterol synthesis itself through consecutive reactions that mainly occur in the endoplasmic reticulum (ER) membrane. Firstly, the squalene synthase ERG9 catalyzes the condensation of 2 farnesyl pyrophosphate moieties to form squalene, which is the precursor of all steroids. Squalene synthase is crucial for balancing the incorporation of farnesyl diphosphate (FPP) into sterol and nonsterol isoprene synthesis. Secondly, squalene is converted into lanosterol by the consecutive action of the squalene epoxidase ERG1 and the lanosterol synthase ERG7. Then, the delta(24)-sterol C-methyltransferase ERG6 methylates lanosterol at C-24 to produce eburicol. Eburicol is the substrate of the sterol 14-alpha demethylase encoded by CYP51A, CYP51B and CYP51C, to yield 4,4,24-trimethyl ergosta-8,14,24(28)-trienol. CYP51B encodes the enzyme primarily responsible for sterol 14-alpha-demethylation, and plays an essential role in ascospore formation. CYP51A encodes an additional sterol 14-alpha-demethylase, induced on ergosterol depletion and responsible for the intrinsic variation in azole sensitivity. The third CYP51 isoform, CYP51C, does not encode a sterol 14-alpha-demethylase, but is required for full virulence on host wheat ears. The C-14 reductase ERG24 then reduces the C14=C15 double bond which leads to 4,4-dimethylfecosterol. A sequence of further demethylations at C-4, involving the C-4 demethylation complex containing the C-4 methylsterol oxidases ERG25, the sterol-4-alpha-carboxylate 3-dehydrogenase ERG26 and the 3-keto-steroid reductase ERG27, leads to the production of fecosterol via 4-methylfecosterol. ERG28 has a role as a scaffold to help anchor ERG25, ERG26 and ERG27 to the endoplasmic reticulum. The C-8 sterol isomerase ERG2 then catalyzes the reaction which results in unsaturation at C-7 in the B ring of sterols and thus converts fecosterol to episterol. The sterol-C5-desaturases ERG3A and ERG3BB then catalyze the introduction of a C-5 double bond in the B ring to produce 5-dehydroepisterol. The C-22 sterol desaturases ERG5A and ERG5B further convert 5-dehydroepisterol into ergosta-5,7,22,24(28)-tetraen-3beta-ol by forming the C-22(23) double bond in the sterol side chain. Finally, ergosta-5,7,22,24(28)-tetraen-3beta-ol is substrate of the C-24(28) sterol reductase ERG4 to produce ergosterol. This chain is Lanosterol synthase ERG7, found in Gibberella zeae (strain ATCC MYA-4620 / CBS 123657 / FGSC 9075 / NRRL 31084 / PH-1) (Wheat head blight fungus).